Consider the following 216-residue polypeptide: MKINTVLFDLDGTLINTNELIISSFLHTLHTYYPNQYKREDVLPFIGPSLHDTFSKIDESKVEELITSYRQFNHDHHDELVEEYETVYETVQELKKQGYKVGIVTTKARQTVEMGLKLSKLDEFFDVVVTIDDVEHVKPHPEPLQKALQLLDAKPEEALMVGDNHHDIVGGQNAGTKTAAVSWTLKGRAYLEAYKPDFMLDKMSDLLPILSDMNRS.

The active-site Nucleophile is Asp-9.

Belongs to the HAD-like hydrolase superfamily. PpaX family. The cofactor is Mg(2+).

It catalyses the reaction diphosphate + H2O = 2 phosphate + H(+). Hydrolyzes pyrophosphate formed during P-Ser-HPr dephosphorylation by HPrK/P. Might play a role in controlling the intracellular pyrophosphate pool. This Bacillus thuringiensis (strain Al Hakam) protein is Pyrophosphatase PpaX.